The primary structure comprises 867 residues: Leucine--tRNA ligase (867 aa).

The 'HIGH' region signature appears at 57–67 (PYPSGTLHMGH). The interval 308 to 327 (SQDERTSDDQPKRGVPTGAV) is disordered. Over residues 309 to 319 (QDERTSDDQPK) the composition is skewed to basic and acidic residues. The 'KMSKS' region motif lies at 631–635 (KMSKS). K634 provides a ligand contact to ATP.

This sequence belongs to the class-I aminoacyl-tRNA synthetase family.

It localises to the cytoplasm. The enzyme catalyses tRNA(Leu) + L-leucine + ATP = L-leucyl-tRNA(Leu) + AMP + diphosphate. The sequence is that of Leucine--tRNA ligase from Synechococcus sp. (strain CC9311).